The chain runs to 572 residues: Urease subunit alpha (572 aa).

Ni(2+)-binding residues include His-139, His-141, and Lys-222. Residue Lys-222 is modified to N6-carboxylysine. His-224 contacts substrate. Positions 251 and 277 each coordinate Ni(2+). The active-site Proton donor is His-325. A Ni(2+)-binding site is contributed by Asp-365.

This sequence belongs to the metallo-dependent hydrolases superfamily. Urease alpha subunit family. Heterotrimer of UreA (gamma), UreB (beta) and UreC (alpha) subunits. Three heterotrimers associate to form the active enzyme. Requires Ni cation as cofactor. In terms of processing, carboxylation allows a single lysine to coordinate two nickel ions.

The protein localises to the cytoplasm. It carries out the reaction urea + 2 H2O + H(+) = hydrogencarbonate + 2 NH4(+). The protein operates within nitrogen metabolism; urea degradation; CO(2) and NH(3) from urea (urease route): step 1/1. This chain is Urease subunit alpha, found in Acetivibrio thermocellus (strain ATCC 27405 / DSM 1237 / JCM 9322 / NBRC 103400 / NCIMB 10682 / NRRL B-4536 / VPI 7372) (Clostridium thermocellum).